The primary structure comprises 329 residues: Malate dehydrogenase (329 aa).

An NAD(+)-binding site is contributed by 12–18 (GAAGQIG). Residues arginine 93 and arginine 99 each contribute to the substrate site. NAD(+) is bound by residues asparagine 106, glutamine 113, and 130–132 (TGN). The substrate site is built by asparagine 132 and arginine 163. Histidine 188 (proton acceptor) is an active-site residue.

Belongs to the LDH/MDH superfamily. MDH type 2 family.

It carries out the reaction (S)-malate + NAD(+) = oxaloacetate + NADH + H(+). In terms of biological role, catalyzes the reversible oxidation of malate to oxaloacetate. This is Malate dehydrogenase from Mycolicibacterium paratuberculosis (strain ATCC BAA-968 / K-10) (Mycobacterium paratuberculosis).